Here is a 1020-residue protein sequence, read N- to C-terminus: Sodium/potassium-transporting ATPase subunit alpha-2 (1020 aa).

The propeptide occupies 1-5 (MGRGA). Residues 1–31 (MGRGAGREYSPAATTAENGGGKKKQKEKELD) form a disordered region. Topologically, residues 6–85 (GREYSPAATT…NALTPPPTTP (80 aa)) are cytoplasmic. S10 is subject to Phosphoserine. An interaction with phosphoinositide-3 kinase region spans residues 80–82 (PPP). The chain crosses the membrane as a helical span at residues 86–106 (EWVKFCRQLFGGFSILLWIGA). Over 107–129 (ILCFLAYGIQAAMEDEPSNDNLY) the chain is Extracellular. A helical membrane pass occupies residues 130–150 (LGVVLAAVVIVTGCFSYYQEA). The Cytoplasmic segment spans residues 151–286 (KSSKIMDSFK…VGRTPIAMEI (136 aa)). Over residues 212-227 (DNSSLTGESEPQTRSP) the composition is skewed to polar residues. Residues 212–231 (DNSSLTGESEPQTRSPEFTH) are disordered. A helical membrane pass occupies residues 287–306 (EHFIQLITGVAVFLGVSFFV). The Extracellular portion of the chain corresponds to 307-318 (LSLILGYSWLEA). The chain crosses the membrane as a helical span at residues 319–336 (VIFLIGIIVANVPEGLLA). Over 337–769 (TVTVCLTLTA…EEGRLIFDNL (433 aa)) the chain is Cytoplasmic. D374 acts as the 4-aspartylphosphate intermediate in catalysis. Phosphoserine is present on residues S439, S450, S496, and S559. The residue at position 570 (T570) is a Phosphothreonine. Phosphoserine occurs at positions 587 and 672. 2 residues coordinate Mg(2+): D714 and D718. A helical membrane pass occupies residues 770–789 (KKSIAYTLTSNIPEITPFLL). Residues 790–799 (FIIANIPLPL) lie on the Extracellular side of the membrane. Residues 800 to 820 (GTVTILCIDLGTDMVPAISLA) form a helical membrane-spanning segment. Over 821 to 840 (YEAAESDIMKRQPRNSQTDK) the chain is Cytoplasmic. S826 is subject to Phosphoserine. Residues 841-863 (LVNERLISMAYGQIGMIQALGGF) traverse the membrane as a helical segment. The Extracellular segment spans residues 864–915 (FTYFVILAENGFLPSRLLGIRLDWDDRTMNDLEDSYGQEWTYEQRKVVEFTC). The chain crosses the membrane as a helical span at residues 916–935 (HTAFFASIVVVQWADLIICK). At 936–948 (TRRNSVFQQGMKN) the chain is on the cytoplasmic side. At S940 the chain carries Phosphoserine; by PKA. Residues 949–967 (KILIFGLLEETALAAFLSY) form a helical membrane-spanning segment. Over 968–982 (CPGMGVALRMYPLKV) the chain is Extracellular. Residues 983–1003 (TWWFCAFPYSLLIFIYDEVRK) traverse the membrane as a helical segment. Topologically, residues 1004-1020 (LILRRYPGGWVEKETYY) are cytoplasmic.

This sequence belongs to the cation transport ATPase (P-type) (TC 3.A.3) family. Type IIC subfamily. The sodium/potassium-transporting ATPase is composed of a catalytic alpha subunit, an auxiliary non-catalytic beta subunit and an additional regulatory subunit. Interacts with regulatory subunit FXYD1.

It is found in the membrane. It localises to the cell membrane. It catalyses the reaction K(+)(out) + Na(+)(in) + ATP + H2O = K(+)(in) + Na(+)(out) + ADP + phosphate + H(+). Its function is as follows. This is the catalytic component of the active enzyme, which catalyzes the hydrolysis of ATP coupled with the exchange of sodium and potassium ions across the plasma membrane. This action creates the electrochemical gradient of sodium and potassium, providing the energy for active transport of various nutrients. The chain is Sodium/potassium-transporting ATPase subunit alpha-2 (ATP1A2) from Homo sapiens (Human).